Reading from the N-terminus, the 951-residue chain is Coiled-coil domain-containing protein 15 (951 aa).

4 coiled-coil regions span residues 64–89 (LIEE…QVKY), 154–193 (DGIE…VIKK), 782–813 (MDIE…EQEC), and 839–874 (LAQL…IQEK).

Interacts with POC5, POC1B, CETN2 and FAM161A.

The protein localises to the cytoplasm. Its subcellular location is the cytoskeleton. The protein resides in the microtubule organizing center. It is found in the centrosome. It localises to the centriole. The protein localises to the centriolar satellite. Its function is as follows. Plays an important role in primary cilium assembly, maintenance, and length regulation. Interacts with centriole inner scaffold proteins to promote proper centriole size and integrity and assembly of functional cilia. Required for the recruitment of both the inner scaffold protein POC1B and the distal SFI1/CETN2 complex to centrioles. The sequence is that of Coiled-coil domain-containing protein 15 (CCDC15) from Homo sapiens (Human).